The sequence spans 702 residues: MADS-box MEF2 type transcription factor MIG1 (702 aa).

One can recognise an MADS-box domain in the interval Met1–Asp61. 2 disordered regions span residues Gly73–Thr608 and Pro658–Ser702. Residues Gly86–Asp96 are compositionally biased toward acidic residues. Positions Ala132–Pro144 are enriched in pro residues. Low complexity predominate over residues His145–Pro155. Residues Gly180–Met195 show a composition bias toward polar residues. Residues Thr201–Pro241 are compositionally biased toward pro residues. Composition is skewed to low complexity over residues Pro273 to Pro284, Glu326 to Glu343, and Glu350 to Pro371. The span at Val456 to Glu465 shows a compositional bias: polar residues. Composition is skewed to low complexity over residues Arg487–Ala512 and Asp530–Ser553. Residues Gln554 to Met567 show a composition bias toward polar residues. The span at Pro587 to Pro600 shows a compositional bias: pro residues. Positions Asn693 to Ser702 are enriched in basic and acidic residues.

The protein belongs to the MEF2 family. Interacts with MAPK MPS1.

It localises to the nucleus. Transcription factor acting downstream of the MPS1 MAP kinase (MAPK) cascade during conidiation and plant infection. Required for overcoming plant defense responses and the differentiation of secondary infectious hyphae in live plant cells. This is MADS-box MEF2 type transcription factor MIG1 from Pyricularia oryzae (Rice blast fungus).